We begin with the raw amino-acid sequence, 366 residues long: Chaperone protein DnaJ (366 aa).

In terms of domain architecture, J spans 5–69 (DYYEVLGVSK…QKRAQYDQFG (65 aa)). The CR-type zinc finger occupies 128 to 210 (GKELNVEIPV…CHGTGKVRKR (83 aa)). Zn(2+)-binding residues include C141, C144, C158, C161, C184, C187, C198, and C201. CXXCXGXG motif repeat units lie at residues 141-148 (CDTCHGSG), 158-165 (CKYCSGTG), 184-191 (CRHCSGTG), and 198-205 (CTTCHGTG).

Belongs to the DnaJ family. In terms of assembly, homodimer. The cofactor is Zn(2+).

The protein resides in the cytoplasm. Functionally, participates actively in the response to hyperosmotic and heat shock by preventing the aggregation of stress-denatured proteins and by disaggregating proteins, also in an autonomous, DnaK-independent fashion. Unfolded proteins bind initially to DnaJ; upon interaction with the DnaJ-bound protein, DnaK hydrolyzes its bound ATP, resulting in the formation of a stable complex. GrpE releases ADP from DnaK; ATP binding to DnaK triggers the release of the substrate protein, thus completing the reaction cycle. Several rounds of ATP-dependent interactions between DnaJ, DnaK and GrpE are required for fully efficient folding. Also involved, together with DnaK and GrpE, in the DNA replication of plasmids through activation of initiation proteins. The sequence is that of Chaperone protein DnaJ from Bacillus cytotoxicus (strain DSM 22905 / CIP 110041 / 391-98 / NVH 391-98).